The primary structure comprises 373 residues: MKIISEGETKLMVPEESTLSKKDTVFYNPVMETNRDISVSVVQSFLDDFKRDEFLMCDPLGGSGARGIRYAKELKFNGDLKVSIGDINPSAVKMIKENLKLNELENVEVFHEDANVLLSKNFKVFNVVDLDPFGSPVPYLDSGIRASLTKGGLLCMTATDTAVLCGAYRKTCIRKYNAVPLKGDKELAVRLMIGYAVKMASKYDIGLKPIFSHVTDHYARTFMVTERGAGKADSAIENLGYIRQDSEQKSFKTFEEGSEKGYAGPFYLGEISDKNIVQNALNTAKTRNYSKRAVNILEMISRESEINQVGCFDIHELCSFIKKLVPPVNDIMENLKENGFKVTRVHYNPYGLKTDAELSDLVVLISEYHSKKY.

Residues 2–365 (KIISEGETKL…AELSDLVVLI (364 aa)) enclose the Trm1 methyltransferase domain. S-adenosyl-L-methionine-binding residues include Arg35, Arg66, Asp86, Asp113, and Ala114.

The protein belongs to the class I-like SAM-binding methyltransferase superfamily. Trm1 family.

It catalyses the reaction guanosine(26) in tRNA + 2 S-adenosyl-L-methionine = N(2)-dimethylguanosine(26) in tRNA + 2 S-adenosyl-L-homocysteine + 2 H(+). Dimethylates a single guanine residue at position 26 of a number of tRNAs using S-adenosyl-L-methionine as donor of the methyl groups. This is tRNA (guanine(26)-N(2))-dimethyltransferase from Methanococcus maripaludis (Methanococcus deltae).